We begin with the raw amino-acid sequence, 457 residues long: tRNA-2-methylthio-N(6)-dimethylallyladenosine synthase (457 aa).

Residues 4 to 119 (RNFHIITFGC…APDAIERLYA (116 aa)) enclose the MTTase N-terminal domain. Cysteine 13, cysteine 48, cysteine 82, cysteine 164, cysteine 168, and cysteine 171 together coordinate [4Fe-4S] cluster. A Radical SAM core domain is found at 150-385 (NTLALMAYVN…QATQLEHSTS (236 aa)). The TRAM domain maps to 388-456 (KSRVGVETTV…KHSLVAEPLI (69 aa)).

Belongs to the methylthiotransferase family. MiaB subfamily. As to quaternary structure, monomer. [4Fe-4S] cluster serves as cofactor.

It is found in the cytoplasm. The enzyme catalyses N(6)-dimethylallyladenosine(37) in tRNA + (sulfur carrier)-SH + AH2 + 2 S-adenosyl-L-methionine = 2-methylsulfanyl-N(6)-dimethylallyladenosine(37) in tRNA + (sulfur carrier)-H + 5'-deoxyadenosine + L-methionine + A + S-adenosyl-L-homocysteine + 2 H(+). In terms of biological role, catalyzes the methylthiolation of N6-(dimethylallyl)adenosine (i(6)A), leading to the formation of 2-methylthio-N6-(dimethylallyl)adenosine (ms(2)i(6)A) at position 37 in tRNAs that read codons beginning with uridine. The protein is tRNA-2-methylthio-N(6)-dimethylallyladenosine synthase of Lawsonia intracellularis (strain PHE/MN1-00).